The chain runs to 289 residues: Ribonuclease H2 subunit A (289 aa).

Residues 20–249 enclose the RNase H type-2 domain; the sequence is PFVMGIDEAG…TETAMRGACF (230 aa). Residues aspartate 26, glutamate 27, and aspartate 134 each coordinate a divalent metal cation.

The protein belongs to the RNase HII family. Eukaryotic subfamily. Mn(2+) serves as cofactor. The cofactor is Mg(2+).

The catalysed reaction is Endonucleolytic cleavage to 5'-phosphomonoester.. In terms of biological role, endonuclease that specifically degrades the RNA of RNA-DNA hybrids. Participates in DNA replication. This is Ribonuclease H2 subunit A (rnaseh2A) from Dictyostelium discoideum (Social amoeba).